The primary structure comprises 218 residues: Thymidylate kinase (218 aa).

15 to 22 is a binding site for ATP; sequence GLDRSGKS.

This sequence belongs to the thymidylate kinase family.

The enzyme catalyses dTMP + ATP = dTDP + ADP. Its pathway is pyrimidine metabolism; dTTP biosynthesis. Its function is as follows. Catalyzes the conversion of dTMP to dTDP. This Caenorhabditis elegans protein is Thymidylate kinase.